The following is a 667-amino-acid chain: Sterile alpha motif domain-containing protein 15 (667 aa).

The span at 1-18 (MAEVPEDYDSGPDEDGEP) shows a compositional bias: acidic residues. 2 disordered regions span residues 1 to 108 (MAEV…KSER) and 147 to 424 (SAME…IKSK). Basic and acidic residues-rich tracts occupy residues 19–53 (ESER…HEPQ), 84–93 (IAKESKRDVP), 187–196 (ESLRVQHEET), and 228–266 (TKPD…KSSE). Over residues 268–277 (AGLEPPEETQ) the composition is skewed to acidic residues. Composition is skewed to basic and acidic residues over residues 284-314 (MQRK…KSTD), 322-338 (EEIK…KPNE), 346-364 (EMMK…EEKN), and 381-422 (PRVE…EPIK). The SAM domain occupies 538 to 601 (WDPEKVAEWI…SRHTRELLEI (64 aa)).

The chain is Sterile alpha motif domain-containing protein 15 (SAMD15) from Macaca fascicularis (Crab-eating macaque).